A 171-amino-acid chain; its full sequence is ATP synthase subunit b (171 aa).

A helical membrane pass occupies residues 10–30 (GLYYGDSIFYAVCFLLLMWII).

Belongs to the ATPase B chain family. As to quaternary structure, F-type ATPases have 2 components, F(1) - the catalytic core - and F(0) - the membrane proton channel. F(1) has five subunits: alpha(3), beta(3), gamma(1), delta(1), epsilon(1). F(0) has three main subunits: a(1), b(2) and c(10-14). The alpha and beta chains form an alternating ring which encloses part of the gamma chain. F(1) is attached to F(0) by a central stalk formed by the gamma and epsilon chains, while a peripheral stalk is formed by the delta and b chains.

Its subcellular location is the cell membrane. Functionally, f(1)F(0) ATP synthase produces ATP from ADP in the presence of a proton or sodium gradient. F-type ATPases consist of two structural domains, F(1) containing the extramembraneous catalytic core and F(0) containing the membrane proton channel, linked together by a central stalk and a peripheral stalk. During catalysis, ATP synthesis in the catalytic domain of F(1) is coupled via a rotary mechanism of the central stalk subunits to proton translocation. In terms of biological role, component of the F(0) channel, it forms part of the peripheral stalk, linking F(1) to F(0). The chain is ATP synthase subunit b from Levilactobacillus brevis (strain ATCC 367 / BCRC 12310 / CIP 105137 / JCM 1170 / LMG 11437 / NCIMB 947 / NCTC 947) (Lactobacillus brevis).